Here is a 103-residue protein sequence, read N- to C-terminus: Large ribosomal subunit protein bL21 (103 aa).

The protein belongs to the bacterial ribosomal protein bL21 family. Part of the 50S ribosomal subunit. Contacts protein L20.

Functionally, this protein binds to 23S rRNA in the presence of protein L20. The protein is Large ribosomal subunit protein bL21 of Verminephrobacter eiseniae (strain EF01-2).